The sequence spans 1157 residues: ATP-dependent helicase/deoxyribonuclease subunit B (1157 aa).

The UvrD-like helicase ATP-binding domain maps to 1–299 (MSIRFIIGRA…SHLEKYFFVR (299 aa)). 8-15 (GRAGAGKT) provides a ligand contact to ATP. The UvrD-like helicase C-terminal domain occupies 279–590 (GNTARFKSPA…LVASLERSRN (312 aa)). [4Fe-4S] cluster contacts are provided by cysteine 792, cysteine 1112, cysteine 1115, and cysteine 1121.

It belongs to the helicase family. AddB/RexB type 1 subfamily. In terms of assembly, heterodimer of AddA and AddB. Requires Mg(2+) as cofactor. The cofactor is [4Fe-4S] cluster.

In terms of biological role, the heterodimer acts as both an ATP-dependent DNA helicase and an ATP-dependent, dual-direction single-stranded exonuclease. Recognizes the chi site generating a DNA molecule suitable for the initiation of homologous recombination. The AddB subunit has 5' -&gt; 3' nuclease activity but not helicase activity. The chain is ATP-dependent helicase/deoxyribonuclease subunit B from Pelotomaculum thermopropionicum (strain DSM 13744 / JCM 10971 / SI).